Consider the following 402-residue polypeptide: Elongation factor Tu (402 aa).

Residues 10–212 (KPHINIGTIG…AVDEYIPEPK (203 aa)) form the tr-type G domain. The segment at 19–26 (GHVDHGKT) is G1. 19–26 (GHVDHGKT) contacts GTP. Threonine 26 contributes to the Mg(2+) binding site. Positions 60-64 (GITIA) are G2. The tract at residues 81–84 (DCPG) is G3. GTP-binding positions include 81 to 85 (DCPGH) and 136 to 139 (NKED). Residues 136 to 139 (NKED) form a G4 region. The tract at residues 177–179 (SAF) is G5.

Belongs to the TRAFAC class translation factor GTPase superfamily. Classic translation factor GTPase family. EF-Tu/EF-1A subfamily. In terms of assembly, monomer.

The protein localises to the cytoplasm. The enzyme catalyses GTP + H2O = GDP + phosphate + H(+). GTP hydrolase that promotes the GTP-dependent binding of aminoacyl-tRNA to the A-site of ribosomes during protein biosynthesis. The polypeptide is Elongation factor Tu (Sulfurovum sp. (strain NBC37-1)).